The sequence spans 205 residues: Urease accessory protein UreG (205 aa).

14 to 21 (GPVGSGKT) is a GTP binding site.

Homodimer. UreD, UreF and UreG form a complex that acts as a GTP-hydrolysis-dependent molecular chaperone, activating the urease apoprotein by helping to assemble the nickel containing metallocenter of UreC. The UreE protein probably delivers the nickel.

It localises to the cytoplasm. With respect to regulation, activation of apourease within the UreDFG-apoprotein complex is inhibited by zinc, copper and cobalt. Facilitates the functional incorporation of the urease nickel metallocenter. This process requires GTP hydrolysis, probably effectuated by UreG. This chain is Urease accessory protein UreG, found in Klebsiella aerogenes (Enterobacter aerogenes).